We begin with the raw amino-acid sequence, 136 residues long: Large-conductance mechanosensitive channel (136 aa).

Transmembrane regions (helical) follow at residues 9 to 29 and 79 to 99; these read AFAS…GAAF and IQTV…LKAI.

It belongs to the MscL family. In terms of assembly, homopentamer.

It localises to the cell inner membrane. Channel that opens in response to stretch forces in the membrane lipid bilayer. May participate in the regulation of osmotic pressure changes within the cell. In Shewanella sp. (strain W3-18-1), this protein is Large-conductance mechanosensitive channel.